The sequence spans 426 residues: uncharacterized protein (426 aa).

Belongs to the serpin family.

This is an uncharacterized protein from Methanosarcina acetivorans (strain ATCC 35395 / DSM 2834 / JCM 12185 / C2A).